The primary structure comprises 174 residues: Peptide deformylase (174 aa).

Residues C96 and H138 each contribute to the Fe cation site. E139 is a catalytic residue. A Fe cation-binding site is contributed by H142.

It belongs to the polypeptide deformylase family. Fe(2+) serves as cofactor.

The catalysed reaction is N-terminal N-formyl-L-methionyl-[peptide] + H2O = N-terminal L-methionyl-[peptide] + formate. Its function is as follows. Removes the formyl group from the N-terminal Met of newly synthesized proteins. Requires at least a dipeptide for an efficient rate of reaction. N-terminal L-methionine is a prerequisite for activity but the enzyme has broad specificity at other positions. This is Peptide deformylase from Helicobacter pylori (strain HPAG1).